The following is a 1026-amino-acid chain: RecBCD enzyme subunit RecB (1026 aa).

One can recognise a UvrD-like helicase ATP-binding domain in the interval 1 to 438 (MSSFDIFSPT…LILDTNYRST (438 aa)). A DNA-binding and helicase activity, interacts with RecC region spans residues 1 to 766 (MSSFDIFSPT…LANYANVTKH (766 aa)). 21-28 (ASAGTGKT) provides a ligand contact to ATP. The interval 815–1026 (SRTIHSFSST…KGNGFLQPGR (212 aa)) is nuclease activity, interacts with RecD and RecA. Mg(2+) is bound by residues His-854, Asp-940, and Asp-953. The active-site For nuclease activity is Asp-953.

The protein belongs to the helicase family. UvrD subfamily. Heterotrimer of RecB, RecC and RecD. All subunits contribute to DNA-binding. Interacts with RecA. Mg(2+) is required as a cofactor.

The enzyme catalyses Exonucleolytic cleavage (in the presence of ATP) in either 5'- to 3'- or 3'- to 5'-direction to yield 5'-phosphooligonucleotides.. The catalysed reaction is Couples ATP hydrolysis with the unwinding of duplex DNA by translocating in the 3'-5' direction.. It carries out the reaction ATP + H2O = ADP + phosphate + H(+). A helicase/nuclease that prepares dsDNA breaks (DSB) for recombinational DNA repair. Binds to DSBs and unwinds DNA via a highly rapid and processive ATP-dependent bidirectional helicase activity. Unwinds dsDNA until it encounters a Chi (crossover hotspot instigator) sequence from the 3' direction. Cuts ssDNA a few nucleotides 3' to the Chi site. The properties and activities of the enzyme are changed at Chi. The Chi-altered holoenzyme produces a long 3'-ssDNA overhang and facilitates RecA-binding to the ssDNA for homologous DNA recombination and repair. Holoenzyme degrades any linearized DNA that is unable to undergo homologous recombination. In the holoenzyme this subunit contributes ATPase, 3'-5' helicase, exonuclease activity and loads RecA onto ssDNA. The chain is RecBCD enzyme subunit RecB from Chlamydia trachomatis serovar D (strain ATCC VR-885 / DSM 19411 / UW-3/Cx).